We begin with the raw amino-acid sequence, 282 residues long: Osteoclast-associated immunoglobulin-like receptor (282 aa).

Residues M1 to T18 form the signal peptide. 2 Ig-like domains span residues P22–S116 and E126–G219. N48 carries an N-linked (GlcNAc...) asparagine glycan. An intrachain disulfide couples C53 to C100. N-linked (GlcNAc...) asparagine glycosylation is present at N145. A disordered region spans residues G221–V282. Residues P273–V282 show a composition bias toward pro residues.

The protein belongs to the leukocyte receptor complex/polymeric immunoglobulin receptor (PIR/LRC) family.

Its subcellular location is the secreted. The protein resides in the cell membrane. Regulator of osteoclastogenesis which plays an important bone-specific function in osteoclast differentiation. This Homo sapiens (Human) protein is Osteoclast-associated immunoglobulin-like receptor (OSCAR).